We begin with the raw amino-acid sequence, 215 residues long: Nascent polypeptide-associated complex subunit alpha (215 aa).

Positions 1–81 are disordered; it reads MPGEATETVP…SEKKARKAMS (81 aa). Over residues 9–28 the composition is skewed to polar residues; it reads VPATEQELPQPQAETGSGTE. Over residues 29–42 the composition is skewed to acidic residues; the sequence is SDSDESVPELEEQD. Position 43 is a phosphoserine; by ILK1 (Ser43). The span at 44 to 57 shows a compositional bias: low complexity; it reads TQATTQQAQLAAAA. The required for DNA-binding stretch occupies residues 69–80; it reads QSRSEKKARKAM. The NAC-A/B domain maps to 70–135; that stretch reads SRSEKKARKA…AKIEDLSQQA (66 aa). Residues 93-108 form an RNA/DNA-binding region; the sequence is RVTIRKSKNILFVITK. At Ser132 the chain carries Phosphoserine. Lys142 is modified (N6-acetyllysine; alternate). Residue Lys142 forms a Glycyl lysine isopeptide (Lys-Gly) (interchain with G-Cter in SUMO2); alternate linkage. Position 159 is a phosphothreonine; by GSK3-beta (Thr159). Residue Thr161 is modified to Phosphothreonine. Phosphoserine is present on residues Ser166, Ser186, Ser191, and Ser203. Residues 176–213 enclose the UBA domain; that stretch reads VEVKDIELVMSQANVSRAKAVRALKNNSNDIVNAIMEL.

Belongs to the NAC-alpha family. In terms of assembly, interacts with TBP and JUN. Part of the nascent polypeptide-associated complex (NAC), which is a heterodimer of NACA and BTF3 (via NAC-A/B domains). NAC associates with ribosomes through the BTF3/NACB subunit and contacts the ribosomal protein L23, which is positioned near the exiting site. Both subunits can contact nascent polypeptide chains. NACA may also form homodimers, and only this form binds DNA. Post-translationally, phosphorylation of Thr-159 by GSK3B may promote proteasome mediated degradation. Phosphorylation of Ser-43 by ILK during cell adhesion may promote nuclear localization. In terms of tissue distribution, ubiquitously expressed.

The protein localises to the cytoplasm. The protein resides in the nucleus. In terms of biological role, prevents inappropriate targeting of non-secretory polypeptides to the endoplasmic reticulum (ER). Binds to nascent polypeptide chains as they emerge from the ribosome and blocks their interaction with the signal recognition particle (SRP), which normally targets nascent secretory peptides to the ER. Also reduces the inherent affinity of ribosomes for protein translocation sites in the ER membrane (M sites). May act as a specific coactivator for JUN, binding to DNA and stabilizing the interaction of JUN homodimers with target gene promoters. In Homo sapiens (Human), this protein is Nascent polypeptide-associated complex subunit alpha (NACA).